A 279-amino-acid chain; its full sequence is Acetyl-coenzyme A carboxylase carboxyl transferase subunit beta (279 aa).

One can recognise a CoA carboxyltransferase N-terminal domain in the interval 23-279; sequence LWWKCEECGA…LTTLLSLMKL (257 aa). Residues cysteine 27, cysteine 30, cysteine 46, and cysteine 49 each contribute to the Zn(2+) site. The C4-type zinc finger occupies 27-49; it reads CEECGAALHKKQMEASDHTCPQC.

The protein belongs to the AccD/PCCB family. In terms of assembly, acetyl-CoA carboxylase is a heterohexamer composed of biotin carboxyl carrier protein (AccB), biotin carboxylase (AccC) and two subunits each of ACCase subunit alpha (AccA) and ACCase subunit beta (AccD). Zn(2+) serves as cofactor.

The protein resides in the cytoplasm. The catalysed reaction is N(6)-carboxybiotinyl-L-lysyl-[protein] + acetyl-CoA = N(6)-biotinyl-L-lysyl-[protein] + malonyl-CoA. It participates in lipid metabolism; malonyl-CoA biosynthesis; malonyl-CoA from acetyl-CoA: step 1/1. Its function is as follows. Component of the acetyl coenzyme A carboxylase (ACC) complex. Biotin carboxylase (BC) catalyzes the carboxylation of biotin on its carrier protein (BCCP) and then the CO(2) group is transferred by the transcarboxylase to acetyl-CoA to form malonyl-CoA. The chain is Acetyl-coenzyme A carboxylase carboxyl transferase subunit beta from Chlorobium chlorochromatii (strain CaD3).